The sequence spans 128 residues: UPF0325 protein CKO_03204 (128 aa).

This sequence belongs to the UPF0325 family.

The chain is UPF0325 protein CKO_03204 from Citrobacter koseri (strain ATCC BAA-895 / CDC 4225-83 / SGSC4696).